Reading from the N-terminus, the 52-residue chain is uncharacterized protein (52 aa).

This is an uncharacterized protein from Haemophilus influenzae (strain ATCC 51907 / DSM 11121 / KW20 / Rd).